Consider the following 162-residue polypeptide: Putative ripening-related protein 7 (162 aa).

The signal sequence occupies residues Met1–Ala30.

This sequence belongs to the kiwellin family.

The protein resides in the secreted. The protein is Putative ripening-related protein 7 of Oryza sativa subsp. japonica (Rice).